Reading from the N-terminus, the 260-residue chain is MKIKDYAVDTARAVAFLSRLPMPPALFNGYDGRLNRLVRAFPFAGLLIGFVPAVTLLLLLSLRTDPLVAALVALSVQALVTGALHEDGLADTADGIGGGSSREQSLIIMKDSRIGTYGAIALILSFAIRAAALAAIIRHSSPLAAALAIPAVAALSRGAIAWHWQRLPPAKPDGVAASNGQPNEAAMHFALVSAGLLAALLIWPPFGLRPLVAGLLVAGVAGFAFTVFIRRKLAGHTGDTLGATQQICEIATLCALATAL.

6 helical membrane passes run 40-60 (AFPFAGLLIGFVPAVTLLLLL), 64-84 (TDPLVAALVALSVQALVTGAL), 117-137 (YGAIALILSFAIRAAALAAII), 142-162 (PLAAALAIPAVAALSRGAIAW), 188-208 (HFALVSAGLLAALLIWPPFGL), and 210-230 (PLVAGLLVAGVAGFAFTVFIR).

Belongs to the CobS family. The cofactor is Mg(2+).

Its subcellular location is the cell inner membrane. The catalysed reaction is alpha-ribazole + adenosylcob(III)inamide-GDP = adenosylcob(III)alamin + GMP + H(+). The enzyme catalyses alpha-ribazole 5'-phosphate + adenosylcob(III)inamide-GDP = adenosylcob(III)alamin 5'-phosphate + GMP + H(+). It functions in the pathway cofactor biosynthesis; adenosylcobalamin biosynthesis; adenosylcobalamin from cob(II)yrinate a,c-diamide: step 7/7. Functionally, joins adenosylcobinamide-GDP and alpha-ribazole to generate adenosylcobalamin (Ado-cobalamin). Also synthesizes adenosylcobalamin 5'-phosphate from adenosylcobinamide-GDP and alpha-ribazole 5'-phosphate. The sequence is that of Adenosylcobinamide-GDP ribazoletransferase from Rhizobium etli (strain ATCC 51251 / DSM 11541 / JCM 21823 / NBRC 15573 / CFN 42).